The primary structure comprises 358 residues: Nicotinate-nucleotide--dimethylbenzimidazole phosphoribosyltransferase (358 aa).

E314 functions as the Proton acceptor in the catalytic mechanism.

This sequence belongs to the CobT family.

The enzyme catalyses 5,6-dimethylbenzimidazole + nicotinate beta-D-ribonucleotide = alpha-ribazole 5'-phosphate + nicotinate + H(+). It functions in the pathway nucleoside biosynthesis; alpha-ribazole biosynthesis; alpha-ribazole from 5,6-dimethylbenzimidazole: step 1/2. Catalyzes the synthesis of alpha-ribazole-5'-phosphate from nicotinate mononucleotide (NAMN) and 5,6-dimethylbenzimidazole (DMB). The protein is Nicotinate-nucleotide--dimethylbenzimidazole phosphoribosyltransferase of Mycobacterium ulcerans (strain Agy99).